We begin with the raw amino-acid sequence, 502 residues long: Aspartyl/glutamyl-tRNA(Asn/Gln) amidotransferase subunit B (502 aa).

It belongs to the GatB/GatE family. GatB subfamily. Heterotrimer of A, B and C subunits.

It catalyses the reaction L-glutamyl-tRNA(Gln) + L-glutamine + ATP + H2O = L-glutaminyl-tRNA(Gln) + L-glutamate + ADP + phosphate + H(+). The enzyme catalyses L-aspartyl-tRNA(Asn) + L-glutamine + ATP + H2O = L-asparaginyl-tRNA(Asn) + L-glutamate + ADP + phosphate + 2 H(+). Functionally, allows the formation of correctly charged Asn-tRNA(Asn) or Gln-tRNA(Gln) through the transamidation of misacylated Asp-tRNA(Asn) or Glu-tRNA(Gln) in organisms which lack either or both of asparaginyl-tRNA or glutaminyl-tRNA synthetases. The reaction takes place in the presence of glutamine and ATP through an activated phospho-Asp-tRNA(Asn) or phospho-Glu-tRNA(Gln). This Arthrobacter sp. (strain FB24) protein is Aspartyl/glutamyl-tRNA(Asn/Gln) amidotransferase subunit B.